The sequence spans 1030 residues: Isoleucine--tRNA ligase 2 (1030 aa).

The 'HIGH' region signature appears at 48–58 (PFATGLPHYGH). The short motif at 589–593 (KMSKR) is the 'KMSKS' region element. Lys592 serves as a coordination point for ATP.

It belongs to the class-I aminoacyl-tRNA synthetase family. IleS type 2 subfamily. In terms of assembly, monomer. It depends on Zn(2+) as a cofactor.

It localises to the cytoplasm. It carries out the reaction tRNA(Ile) + L-isoleucine + ATP = L-isoleucyl-tRNA(Ile) + AMP + diphosphate. Its function is as follows. Catalyzes the attachment of isoleucine to tRNA(Ile). As IleRS can inadvertently accommodate and process structurally similar amino acids such as valine, to avoid such errors it has two additional distinct tRNA(Ile)-dependent editing activities. One activity is designated as 'pretransfer' editing and involves the hydrolysis of activated Val-AMP. The other activity is designated 'posttransfer' editing and involves deacylation of mischarged Val-tRNA(Ile). Functionally, confers high-level resistance to the antibiotic mupirocin (pseudomonic acid A), an Ile-analog produced by P.fluorescens NCIMB 10586 itself that competitively inhibits activation by Ile-tRNA synthetase, thus inhibiting protein biosynthesis. This chain is Isoleucine--tRNA ligase 2 (ileS2), found in Pseudomonas fluorescens.